The primary structure comprises 857 residues: Facilitated trehalose transporter Tret1-1 (857 aa).

Disordered regions lie at residues 1–28 (MSGR…KLKE) and 62–203 (DPFL…KATS). Residues 1–392 (MSGRDSRGAG…VYRPTTNPIY (392 aa)) are Cytoplasmic-facing. Polar residues predominate over residues 69-81 (VSPQRHPQNTVRT). Basic and acidic residues predominate over residues 134–143 (EIREHRDRQQ). Over residues 171–181 (GNSNTNSNKAA) the composition is skewed to polar residues. Phosphoserine occurs at positions 248, 249, 250, 320, and 322. Residues 327 to 346 (LTSRQHFQQQRSISTDSRKS) form a disordered region. Polar residues predominate over residues 330–341 (RQHFQQQRSIST). A helical transmembrane segment spans residues 393 to 413 (IWTQVLAALSVSLGSLVVGFV). The Extracellular segment spans residues 414-440 (SAYTSPALVSMTDRNITSFEVTQDAGS). Asn-428 is a glycosylation site (N-linked (GlcNAc...) asparagine). A helical membrane pass occupies residues 441–461 (WVGGIMPLAGLAGGIAGGPLI). Residues 462-473 (EYLGRRNTILAT) are Cytoplasmic-facing. Residues 474–494 (AVPFIVSSLLIACAVNVAMVL) traverse the membrane as a helical segment. The Extracellular segment spans residues 495–497 (CGR). A helical membrane pass occupies residues 498-518 (FLAGFCVGIASLSLPVYLGET). The Cytoplasmic portion of the chain corresponds to 519 to 528 (VQPEVRGTLG). The chain crosses the membrane as a helical span at residues 529-549 (LLPTAFGNIGILLCFVAGSFM). Residue Asn-550 is glycosylated (N-linked (GlcNAc...) asparagine). At 550–552 (NWS) the chain is on the extracellular side. A helical transmembrane segment spans residues 553–573 (MLAFLGAALPVPFLILMFLIP). At 574-636 (ETPRWFVGRG…ELFKRINLKP (63 aa)) the chain is on the cytoplasmic side. The helical transmembrane segment at 637 to 657 (LSISLGLMFFQQFSGINAVIF) threads the bilayer. Residues 658–673 (YTVQIFKDAGSTIDSN) lie on the Extracellular side of the membrane. A helical transmembrane segment spans residues 674 to 694 (LCTIIVGIVNFFATFMGILLI). Residues 695–700 (DRLGRK) are Cytoplasmic-facing. The helical transmembrane segment at 701–721 (ILLYISDIAMILTLSILGGFF) threads the bilayer. Residues 722–740 (YCKAHGPDVSHLGWLPLTC) lie on the Extracellular side of the membrane. Residues 741–761 (FVIYILGFSLGFGPIPWLMMG) form a helical membrane-spanning segment. The Cytoplasmic segment spans residues 762-770 (EILPAKIRG). Residues 771-791 (PAASVVTAFNWFCTFVVTKTF) traverse the membrane as a helical segment. Over 792 to 801 (QDLTGAMGAH) the chain is Extracellular. The helical transmembrane segment at 802–822 (GAFWLFGAICFVGLFFVIIYV) threads the bilayer. Over 823-857 (PETQGKTLEDIERKMMGRVRRMSSVANIKPLSFNM) the chain is Cytoplasmic. Residues Ser-845 and Ser-846 each carry the phosphoserine modification.

This sequence belongs to the major facilitator superfamily. Sugar transporter (TC 2.A.1.1) family. Trehalose transporter subfamily.

Its subcellular location is the cell membrane. Functionally, low-capacity facilitative transporter for trehalose. Does not transport maltose, sucrose or lactose. Mediates the bidirectional transfer of trehalose. Responsible for the transport of trehalose synthesized in the fat body and the incorporation of trehalose into other tissues that require a carbon source, thereby regulating trehalose levels in the hemolymph. In Drosophila simulans (Fruit fly), this protein is Facilitated trehalose transporter Tret1-1.